We begin with the raw amino-acid sequence, 255 residues long: Indole-3-glycerol phosphate synthase (255 aa).

The protein belongs to the TrpC family.

The enzyme catalyses 1-(2-carboxyphenylamino)-1-deoxy-D-ribulose 5-phosphate + H(+) = (1S,2R)-1-C-(indol-3-yl)glycerol 3-phosphate + CO2 + H2O. It functions in the pathway amino-acid biosynthesis; L-tryptophan biosynthesis; L-tryptophan from chorismate: step 4/5. In Priestia megaterium (strain ATCC 12872 / QMB1551) (Bacillus megaterium), this protein is Indole-3-glycerol phosphate synthase (trpC).